Here is an 813-residue protein sequence, read N- to C-terminus: Leucine--tRNA ligase (813 aa).

The short motif at 41 to 51 is the 'HIGH' region element; the sequence is PYPSGTLHMGH. The short motif at 575-579 is the 'KMSKS' region element; the sequence is KMSKS. K578 serves as a coordination point for ATP.

It belongs to the class-I aminoacyl-tRNA synthetase family.

It localises to the cytoplasm. It carries out the reaction tRNA(Leu) + L-leucine + ATP = L-leucyl-tRNA(Leu) + AMP + diphosphate. This chain is Leucine--tRNA ligase, found in Francisella tularensis subsp. tularensis (strain WY96-3418).